The sequence spans 261 residues: 4-hydroxy-tetrahydrodipicolinate reductase (261 aa).

8-13 (GYKGRM) lines the NAD(+) pocket. NADP(+) is bound at residue R36. Residues 95 to 97 (GTT) and 121 to 124 (APNF) each bind NAD(+). H151 functions as the Proton donor/acceptor in the catalytic mechanism. Position 152 (H152) interacts with (S)-2,3,4,5-tetrahydrodipicolinate. Catalysis depends on K155, which acts as the Proton donor. 161–162 (GT) contacts (S)-2,3,4,5-tetrahydrodipicolinate.

The protein belongs to the DapB family.

The protein localises to the cytoplasm. The catalysed reaction is (S)-2,3,4,5-tetrahydrodipicolinate + NAD(+) + H2O = (2S,4S)-4-hydroxy-2,3,4,5-tetrahydrodipicolinate + NADH + H(+). It carries out the reaction (S)-2,3,4,5-tetrahydrodipicolinate + NADP(+) + H2O = (2S,4S)-4-hydroxy-2,3,4,5-tetrahydrodipicolinate + NADPH + H(+). Its pathway is amino-acid biosynthesis; L-lysine biosynthesis via DAP pathway; (S)-tetrahydrodipicolinate from L-aspartate: step 4/4. Its function is as follows. Catalyzes the conversion of 4-hydroxy-tetrahydrodipicolinate (HTPA) to tetrahydrodipicolinate. This chain is 4-hydroxy-tetrahydrodipicolinate reductase, found in Lactiplantibacillus plantarum (strain ATCC BAA-793 / NCIMB 8826 / WCFS1) (Lactobacillus plantarum).